The following is a 905-amino-acid chain: Nitrate reductase [NADPH] (905 aa).

A disordered region spans residues 1–42 (METSTTTTLLQQERIPENSEPISTHIHTHSLPPTPPGTAKPS). Position 179 (Cys-179) interacts with Mo-molybdopterin. The Cytochrome b5 heme-binding domain maps to 546 to 621 (NRKITIEELK…LPTYHIGTLD (76 aa)). Heme-binding residues include His-581 and His-604. The 112-residue stretch at 648–759 (KTWSKAILDK…KGPTGKFVYH (112 aa)) folds into the FAD-binding FR-type domain. Residues 702-705 (RSYT), 719-723 (LIKIY), 733-735 (VMT), Ser-783, and Thr-786 contribute to the FAD site. Position 875–884 (875–884 (LLLVCGPPPM)) interacts with NADP(+).

The protein belongs to the nitrate reductase family. In terms of assembly, homodimer. The cofactor is FAD. It depends on heme as a cofactor. Mo-molybdopterin serves as cofactor.

It catalyses the reaction nitrite + NADP(+) + H2O = nitrate + NADPH + H(+). Its function is as follows. Nitrate reductase is a key enzyme involved in the first step of nitrate assimilation in plants, fungi and bacteria. In Fusarium oxysporum (Fusarium vascular wilt), this protein is Nitrate reductase [NADPH] (NIA).